The sequence spans 239 residues: Uridylate kinase (239 aa).

Lys-12 to Gly-15 provides a ligand contact to ATP. Residues Gly-20–Gly-25 are involved in allosteric activation by GTP. Gly-54 contributes to the UMP binding site. ATP-binding residues include Gly-55 and Arg-59. Residues Asp-74 and Thr-135 to Thr-142 each bind UMP. The ATP site is built by Thr-162, Tyr-168, and Asp-171.

Belongs to the UMP kinase family. In terms of assembly, homohexamer.

It localises to the cytoplasm. The catalysed reaction is UMP + ATP = UDP + ADP. It participates in pyrimidine metabolism; CTP biosynthesis via de novo pathway; UDP from UMP (UMPK route): step 1/1. With respect to regulation, allosterically activated by GTP. Inhibited by UTP. Its function is as follows. Catalyzes the reversible phosphorylation of UMP to UDP. In Geobacter metallireducens (strain ATCC 53774 / DSM 7210 / GS-15), this protein is Uridylate kinase.